The following is a 99-amino-acid chain: L-rhamnose mutarotase (99 aa).

Tyrosine 18 lines the substrate pocket. Histidine 22 acts as the Proton donor in catalysis. Substrate contacts are provided by residues tyrosine 41 and 76–77 (WW).

The protein belongs to the rhamnose mutarotase family. Homodimer.

Its subcellular location is the cytoplasm. It catalyses the reaction alpha-L-rhamnose = beta-L-rhamnose. It functions in the pathway carbohydrate metabolism; L-rhamnose metabolism. Functionally, involved in the anomeric conversion of L-rhamnose. The protein is L-rhamnose mutarotase of Shigella boydii serotype 18 (strain CDC 3083-94 / BS512).